The following is a 609-amino-acid chain: MDNILKASNMEGTSTMTVTSRSSEDSSCISNHEQDTDTHKDGDTSGLENSKISKRKWMKEFFKLSKSPASKSSRSIGSMKSNQSLVSMKSSDDGNSYKNDYSSICGNSLPSAGLSRSNSVKELKLDSTGSQRSKNNVAMLARSSTTSQTTCSSSSSSSSYNSIKGNENDILLQNNNHFRHNKEIPQSKGSSNINTASIMSQYNVDTQATAIMSDMQKQYDSQQMTSPFVNEDLHFDPNGEVSHVIKAIFKEIGYKYDDFSDIPVFQLMQEMYQLVKKNSSARRTKITDYASKLKEKEAQLKSQNDKILKLETTNKAYKTKYKEVSLENKKIKEAFKELDNESYNHDEELLKKYKYTRETLDRVNREQQLIIDQNEFLKKSVNELQNEVNATNFKFSLFKEKYAKLADSITELNTSTKKREALGENLTFECNELKEICLKYKKNIENISNTNKNLQNSFKNERKKVLDLRNERNLLKKEILLIECHGSYSLLLVSNILTCYRFLLPSDTIIETESLIKELLNMNNSLSNHVSSSDEPPAEYSKRLELKCVEFEEKLLYFYQELVTKKIIDVIYKCFINYYKKSRQTDQKSNQNSSTPYKQSQRQVPHSIK.

3 disordered regions span residues 1–50 (MDNI…LENS), 68–96 (PASKSSRSIGSMKSNQSLVSMKSSDDGNS), and 124–165 (KLDS…SIKG). Residues 10–31 (MEGTSTMTVTSRSSEDSSCISN) show a composition bias toward polar residues. Residues 32–43 (HEQDTDTHKDGD) are compositionally biased toward basic and acidic residues. Over residues 68 to 81 (PASKSSRSIGSMKS) the composition is skewed to low complexity. Composition is skewed to polar residues over residues 82 to 96 (NQSLVSMKSSDDGNS) and 127 to 136 (STGSQRSKNN). Positions 143-159 (SSTTSQTTCSSSSSSSS) are enriched in low complexity. Coiled coils occupy residues 283–342 (RTKI…DNES), 357–393 (RETLDRVNREQQLIIDQNEFLKKSVNELQNEVNATNF), and 424–483 (ENLT…LLIE). The disordered stretch occupies residues 586-609 (DQKSNQNSSTPYKQSQRQVPHSIK). Residues 587-609 (QKSNQNSSTPYKQSQRQVPHSIK) show a composition bias toward polar residues.

This sequence belongs to the MPC70 family. In terms of assembly, interacts directly with MPC54, NUD1 and SPC42. Interacts with ADY3. Interacts with ADY4. Probable component of a SPB complex composed of ADY3, SSP1, DON1, MPC54, SPO21/MPC70, NUD1 and CNM67.

The protein resides in the prospore membrane. It localises to the cytoplasm. Its subcellular location is the cytoskeleton. It is found in the spindle pole. Functionally, involved in the pathway that organizes the shaping and sizing of the prospore membrane (PSM) during sporulation. May provide a meiosis-specific scaffold for the assembly of other proteins on spindle pole bodies (SPBs), and may be a limiting component for SPB formation. This is Sporulation-specific protein 21 (SPO21) from Saccharomyces cerevisiae (strain ATCC 204508 / S288c) (Baker's yeast).